Here is a 299-residue protein sequence, read N- to C-terminus: Transcription elongation factor A protein 2 (299 aa).

A TFIIS N-terminal domain is found at Glu-5–Ser-82. A Glycyl lysine isopeptide (Lys-Gly) (interchain with G-Cter in ubiquitin) cross-link involves residue Lys-57. Residues Ser-59 and Ser-100 each carry the phosphoserine modification. Residues Asp-83 to Thr-126 are disordered. Polar residues predominate over residues Leu-95 to Leu-109. The TFIIS central domain maps to Val-138 to Thr-254. Residues Asp-257 to Lys-297 form a TFIIS-type zinc finger. 4 residues coordinate Zn(2+): Cys-261, Cys-264, Cys-289, and Cys-292.

It belongs to the TFS-II family. As to quaternary structure, interacts with the basal transcription factor GTF2B. Interacts with REXO1. As to expression, testis specific.

Its subcellular location is the nucleus. In terms of biological role, necessary for efficient RNA polymerase II transcription elongation past template-encoded arresting sites. The arresting sites in DNA have the property of trapping a certain fraction of elongating RNA polymerases that pass through, resulting in locked ternary complexes. Cleavage of the nascent transcript by S-II allows the resumption of elongation from the new 3'-terminus. This Rattus norvegicus (Rat) protein is Transcription elongation factor A protein 2 (Tcea2).